The chain runs to 89 residues: Acylphosphatase (89 aa).

Positions 4–89 (SRRFLVSGTV…EQPPEGFRVL (86 aa)) constitute an Acylphosphatase-like domain. Catalysis depends on residues Arg-19 and Asn-37.

Belongs to the acylphosphatase family.

It carries out the reaction an acyl phosphate + H2O = a carboxylate + phosphate + H(+). This Alkalilimnicola ehrlichii (strain ATCC BAA-1101 / DSM 17681 / MLHE-1) protein is Acylphosphatase (acyP).